Consider the following 764-residue polypeptide: Thyrotropin receptor (764 aa).

Positions 1–21 are cleaved as a signal peptide; the sequence is MRPGSLLLLVLLLALSRSLRG. The Extracellular portion of the chain corresponds to 22–413; the sequence is KECASPPCEC…EFNPCEDIMG (392 aa). The cysteines at positions 31 and 41 are disulfide-linked. N-linked (GlcNAc...) asparagine glycosylation is found at N77 and N99. LRR repeat units lie at residues 100–124, 125–150, 151–174, 176–199, 200–223, 225–248, and 264–288; these read LSKMTHIEIRNTRSLTYIDPDALTE, LPLLKFLGIFNTGLRIFPDLTKIYST, DIFFILEITDNPYMTSVPENAFQG, CNETLTLKLYNNGFTSVQGHAFNG, TKLDAVYLNKNKYLTAIDNDAFGG, YSGPTLLDVSSTSVTALPSKGLEH, and PLSLSFLHLTRADLSYPSHCCAFKN. N-linked (GlcNAc...) asparagine glycosylation is found at N177 and N198. A glycan (N-linked (GlcNAc...) asparagine) is linked at N302. Y385 carries the sulfotyrosine modification. Residues 414-441 form a helical membrane-spanning segment; sequence YRFLRIVVWFVSLLALLGNIFVLLILLT. At 442 to 450 the chain is on the cytoplasmic side; it reads SHYKLTVPR. Residues 451 to 473 form a helical membrane-spanning segment; sequence FLMCNLAFADFCMGVYLLLIASV. The Extracellular portion of the chain corresponds to 474-494; that stretch reads DLYTHSEYYNHAIDWQTGPGC. C494 and C569 are oxidised to a cystine. The chain crosses the membrane as a helical span at residues 495 to 517; the sequence is NTAGFFTVFASELSVYTLTVITL. Over 518–537 the chain is Cytoplasmic; that stretch reads ERWYAITFAMRLDRKIRLRH. The helical transmembrane segment at 538–560 threads the bilayer; sequence AYTIMAGGWVSCFLLALLPMVGI. Over 561–580 the chain is Extracellular; that stretch reads SSYAKVSICLPMDTDTPLAL. Residues 581-602 form a helical membrane-spanning segment; it reads AYIVLVLLLNVVAFVVVCSCYV. At 603–625 the chain is on the cytoplasmic side; sequence KIYITVRNPQYNPRDKDTKIAKR. A helical transmembrane segment spans residues 626 to 649; the sequence is MAVLIFTDFMCMAPISFYALSALM. At 650–660 the chain is on the extracellular side; sequence NKPLITVTNSK. The helical transmembrane segment at 661-682 threads the bilayer; the sequence is ILLVLFYPLNSCANPFLYAIFT. Topologically, residues 683–764 are cytoplasmic; it reads KAFQRDVFIL…ISEEYKQTAL (82 aa). The PDZ-binding motif lies at 762 to 764; that stretch reads TAL.

This sequence belongs to the G-protein coupled receptor 1 family. FSH/LSH/TSH subfamily. As to quaternary structure, interacts with heterodimer GPHA2:GPHB5; this interaction stimulates cAMP production. Interacts (via the PDZ-binding motif) with SCRIB; regulates TSHR trafficking and function. Glycosylated. Post-translationally, sulfated. Sulfation on Tyr-385 plays a role in thyrotropin receptor binding and activation.

The protein localises to the cell membrane. It is found in the basolateral cell membrane. Receptor for the thyroid-stimulating hormone (TSH) or thyrotropin. Also acts as a receptor for the heterodimeric glycoprotein hormone (GPHA2:GPHB5) or thyrostimulin. The activity of this receptor is mediated by G proteins which activate adenylate cyclase. Plays a central role in controlling thyroid cell metabolism. The sequence is that of Thyrotropin receptor (Tshr) from Mus musculus (Mouse).